A 141-amino-acid polypeptide reads, in one-letter code: Lutropin subunit beta (141 aa).

Residues 1-18 form the signal peptide; the sequence is MGTLQGLLLWLLLGTGGA. Cystine bridges form between cysteine 29/cysteine 77, cysteine 43/cysteine 92, cysteine 46/cysteine 130, cysteine 54/cysteine 108, cysteine 58/cysteine 110, and cysteine 113/cysteine 120. N-linked (GlcNAc...) asparagine glycosylation occurs at asparagine 33.

It belongs to the glycoprotein hormones subunit beta family. Heterodimer of a common alpha chain and a unique beta chain which confers biological specificity to thyrotropin, lutropin, follitropin and gonadotropin.

It localises to the secreted. Its function is as follows. Promotes spermatogenesis and ovulation by stimulating the testes and ovaries to synthesize steroids. The chain is Lutropin subunit beta (LHB) from Oryctolagus cuniculus (Rabbit).